The sequence spans 215 residues: Large ribosomal subunit protein uL16 (215 aa).

Positions 1 to 22 are disordered; it reads MGRRPARCYRQPKGKPYPKSRY.

This sequence belongs to the universal ribosomal protein uL16 family.

In Tetrahymena thermophila (strain SB210), this protein is Large ribosomal subunit protein uL16 (RPL10).